Reading from the N-terminus, the 603-residue chain is UvrABC system protein C (603 aa).

The GIY-YIG domain maps to 15-92; that stretch reads DQPGCYLMKD…IKKHDPRFNI (78 aa). Residues 197-232 form the UVR domain; it reads KTVKNDLMKKMQEAAENMEFEKAGEFRDQINAIETT.

The protein belongs to the UvrC family. Interacts with UvrB in an incision complex.

It is found in the cytoplasm. The UvrABC repair system catalyzes the recognition and processing of DNA lesions. UvrC both incises the 5' and 3' sides of the lesion. The N-terminal half is responsible for the 3' incision and the C-terminal half is responsible for the 5' incision. The polypeptide is UvrABC system protein C (Listeria monocytogenes serotype 4b (strain F2365)).